The chain runs to 223 residues: Serine/threonine/tyrosine-interacting protein (223 aa).

The 149-residue stretch at 28 to 176 folds into the Tyrosine-protein phosphatase domain; sequence EMQEILPGLF…LQEYEAIYLA (149 aa). The short motif at 76 to 78 is the Interaction with FBXW7 element; the sequence is FQQ. Ser184, Ser193, and Ser201 each carry phosphoserine. The disordered stretch occupies residues 197 to 223; sequence GTTGSLKRTHEEEDDFGTMQVATAQNG.

Belongs to the protein-tyrosine phosphatase family. Non-receptor class subfamily. In terms of assembly, interacts with MAPK1; independently of MAPK1 phosphorylation status. Interacts with CARHSP1/Crhsp-24. Interacts (via FQQ motif) with FBXW7 isoforms 1 (via F-box domain) and 3 (via F-box domain); the interaction is direct and prevents FBXW7 interaction with SKP1, a component of the SCF(FBXW7) complex. Does not interact with FBXW7 isoform 2.

It localises to the nucleus. The protein resides in the cytoplasm. The protein localises to the cytosol. In terms of biological role, catalytically inactive phosphatase. Acts as a nuclear anchor for MAPK1/MAPK3 (ERK1/ERK2). Modulates cell-fate decisions and cell migration by spatiotemporal regulation of MAPK1/MAPK3 (ERK1/ERK2). By binding to the F-box of FBXW7, prevents the assembly of FBXW7 into the SCF E3 ubiquitin-protein ligase complex, and thereby inhibits degradation of its substrates. Plays a role in spermatogenesis. The chain is Serine/threonine/tyrosine-interacting protein from Homo sapiens (Human).